We begin with the raw amino-acid sequence, 188 residues long: Surfactant protein C (188 aa).

Positions 1–23 (MDMGSKEALMESPPDYSAAPRGR) are excised as a propeptide. Residues C28 and C29 are each lipidated (S-palmitoyl cysteine). A propeptide spanning residues 59–188 (HMSQKHTEMV…LCGEVPLIYI (130 aa)) is cleaved from the precursor. Positions 94-188 (FPIGSTGIVT…LCGEVPLIYI (95 aa)) constitute a BRICHOS domain. An intrachain disulfide couples C121 to C180. Residues 144 to 164 (NPAEPPTQRGQDKGPAAGPAS) form a disordered region.

It localises to the secreted. The protein localises to the extracellular space. Its subcellular location is the surface film. In terms of biological role, pulmonary surfactant associated proteins promote alveolar stability by lowering the surface tension at the air-liquid interface in the peripheral air spaces. This chain is Surfactant protein C (SFTPC), found in Oryctolagus cuniculus (Rabbit).